The sequence spans 1026 residues: Multidrug resistance protein MdtC (1026 aa).

Helical transmembrane passes span isoleucine 15 to alanine 35, glutamate 333 to leucine 353, leucine 360 to cysteine 380, leucine 387 to leucine 407, valine 431 to leucine 451, phenylalanine 463 to proline 483, leucine 528 to proline 548, leucine 853 to serine 873, leucine 897 to valine 917, proline 953 to glycine 973, and isoleucine 984 to valine 1004.

Belongs to the resistance-nodulation-cell division (RND) (TC 2.A.6) family. MdtC subfamily. As to quaternary structure, part of a tripartite efflux system composed of MdtA, MdtB and MdtC. MdtC forms a heteromultimer with MdtB.

The protein localises to the cell inner membrane. The chain is Multidrug resistance protein MdtC from Salmonella choleraesuis (strain SC-B67).